The primary structure comprises 89 residues: Small ribosomal subunit protein uS15 (89 aa).

It belongs to the universal ribosomal protein uS15 family. As to quaternary structure, part of the 30S ribosomal subunit. Forms a bridge to the 50S subunit in the 70S ribosome, contacting the 23S rRNA.

Functionally, one of the primary rRNA binding proteins, it binds directly to 16S rRNA where it helps nucleate assembly of the platform of the 30S subunit by binding and bridging several RNA helices of the 16S rRNA. Its function is as follows. Forms an intersubunit bridge (bridge B4) with the 23S rRNA of the 50S subunit in the ribosome. This chain is Small ribosomal subunit protein uS15, found in Lactobacillus delbrueckii subsp. bulgaricus (strain ATCC 11842 / DSM 20081 / BCRC 10696 / JCM 1002 / NBRC 13953 / NCIMB 11778 / NCTC 12712 / WDCM 00102 / Lb 14).